A 279-amino-acid polypeptide reads, in one-letter code: Shikimate dehydrogenase (NADP(+)) (279 aa).

Residues 19-21 and Thr66 each bind shikimate; that span reads SFS. Lys70 (proton acceptor) is an active-site residue. Glu82 is an NADP(+) binding site. 2 residues coordinate shikimate: Asn91 and Asp106. NADP(+) contacts are provided by residues 130-134 and Leu222; that span reads GSGGA. Tyr224 provides a ligand contact to shikimate. An NADP(+)-binding site is contributed by Gly245.

This sequence belongs to the shikimate dehydrogenase family. Homodimer.

It catalyses the reaction shikimate + NADP(+) = 3-dehydroshikimate + NADPH + H(+). Its pathway is metabolic intermediate biosynthesis; chorismate biosynthesis; chorismate from D-erythrose 4-phosphate and phosphoenolpyruvate: step 4/7. In terms of biological role, involved in the biosynthesis of the chorismate, which leads to the biosynthesis of aromatic amino acids. Catalyzes the reversible NADPH linked reduction of 3-dehydroshikimate (DHSA) to yield shikimate (SA). The protein is Shikimate dehydrogenase (NADP(+)) of Methanococcus maripaludis (strain C6 / ATCC BAA-1332).